A 177-amino-acid polypeptide reads, in one-letter code: Large ribosomal subunit protein uL6 (177 aa).

This sequence belongs to the universal ribosomal protein uL6 family. In terms of assembly, part of the 50S ribosomal subunit.

Functionally, this protein binds to the 23S rRNA, and is important in its secondary structure. It is located near the subunit interface in the base of the L7/L12 stalk, and near the tRNA binding site of the peptidyltransferase center. This is Large ribosomal subunit protein uL6 from Buchnera aphidicola subsp. Acyrthosiphon kondoi (Acyrthosiphon kondoi symbiotic bacterium).